The chain runs to 142 residues: Hemoglobin subunit alpha-A (142 aa).

A Globin domain is found at 2-142; that stretch reads VLSAADKNNV…VGTVLTAKYR (141 aa). His59 serves as a coordination point for O2. His88 is a heme b binding site.

This sequence belongs to the globin family. As to quaternary structure, heterotetramer of two alpha chains and two beta chains. In terms of tissue distribution, red blood cells.

In terms of biological role, involved in oxygen transport from the lung to the various peripheral tissues. This chain is Hemoglobin subunit alpha-A (HBAA), found in Meleagris gallopavo (Wild turkey).